The sequence spans 376 residues: UPF0754 membrane protein SSP0953 (376 aa).

The next 2 membrane-spanning stretches (helical) occupy residues 4 to 24 and 356 to 376; these read FLVIIFMMVIGALIGGVTNVI and FLGFLLGGIIGLFQGVIAIFV.

Belongs to the UPF0754 family.

It is found in the cell membrane. This Staphylococcus saprophyticus subsp. saprophyticus (strain ATCC 15305 / DSM 20229 / NCIMB 8711 / NCTC 7292 / S-41) protein is UPF0754 membrane protein SSP0953.